Consider the following 771-residue polypeptide: MFVIKRNGYKENVMFDKITSRIRKLCYGLNTDHIDPIKIAMKVIQGIYNGVTTVELDTLAAEIAATCTTQHPDYAILAARIAVSNLHKETKKLFSEVMEDLFNYVNPKNGKHSPIISSITMDIVNKYKDKLNSVIIYERDFSYNYFGFKTLEKSYLLKINNKIVERPQHMLMRVAVGIHQWDIDSAIETYNLLSEKWFTHASPTLFNAGTSRHQMSSCFLLNMIDDSIEGIYDTLKRCALISKMAGGIGLSISNIRASGSYISGTNGISNGIIPMLRVYNNTARYIDQGGNKRPGVMAIYLEPWHSDIMAFLDLKKNTGNEEHRTRDLFIALWIPDLFMKRVKDDGEWSLMCPDECPGLDNVWGDEFERLYTLYERERRYKSIIKARVVWKAIIESQIETGTPFILYKDACNKKSNQQNLGTIKCSNLCTEIIQYADANEVAVCNLASVALNMFVIDGRFDFLKLKDVVKVIVRNLNKIIDINYYPIPEAEISNKRHRPIGIGVQGLADAFILLNYPFDSLEAQDLNKKIFETIYYGALEASCELAEKEGPYDTYVGSYASNGILQYDLWNVVPSDLWNWEPLKDKIRTYGLRNSLLVAPMPTASTAQILGNNESVEPYTSNIYTRRVLSGEFQVVNPHLLRVLTERKLWNDEIKNRIMADGGSIQNTNLPEDIKRVYKTIWEIPQKTIIKMAADRGAFIDQSQSMNIHIADPSYSKLTSMHFYGWSLGLKTGMYYLRTKPASAPIQFTLDKDKIKPLVVCDSEICTSCSG.

The region spanning 1-92 (MFVIKRNGYK…VSNLHKETKK (92 aa)) is the ATP-cone domain. ATP is bound by residues 5-6 (KR), 11-17 (ENVMFDK), Thr53, Asp57, and Lys88. GDP-binding residues include Ser202 and Ser217. DTTP contacts are provided by residues 226 to 228 (DSI), Lys243, and Arg256. Asn427 provides a ligand contact to GDP. Asn427 functions as the Proton acceptor in the catalytic mechanism. The active-site Cysteine radical intermediate is Cys429. Residues Glu431 and 603-606 (TAST) contribute to the GDP site. The Proton acceptor role is filled by Glu431.

Belongs to the ribonucleoside diphosphate reductase large chain family. Interacts with RNR2/OPG047 subunit. It depends on Mg(2+) as a cofactor.

It catalyses the reaction a 2'-deoxyribonucleoside 5'-diphosphate + [thioredoxin]-disulfide + H2O = a ribonucleoside 5'-diphosphate + [thioredoxin]-dithiol. Its function is as follows. Ribonucleoside-diphosphate reductase holoenzyme provides the precursors necessary for viral DNA synthesis. Allows virus growth in non-dividing cells. Catalyzes the biosynthesis of deoxyribonucleotides from the corresponding ribonucleotides. This chain is Ribonucleoside-diphosphate reductase large subunit (OPG080), found in Homo sapiens (Human).